Here is a 436-residue protein sequence, read N- to C-terminus: Chaperone SurA (436 aa).

A signal peptide spans 1–30 (MKFFQRPERRLKQWGLALLLAASALLPARA). 2 consecutive PpiC domains span residues 180-281 (ETEY…KLVD) and 291-389 (VTQT…QVLE).

It is found in the periplasm. It catalyses the reaction [protein]-peptidylproline (omega=180) = [protein]-peptidylproline (omega=0). Its function is as follows. Chaperone involved in the correct folding and assembly of outer membrane proteins. Recognizes specific patterns of aromatic residues and the orientation of their side chains, which are found more frequently in integral outer membrane proteins. May act in both early periplasmic and late outer membrane-associated steps of protein maturation. This is Chaperone SurA from Thiobacillus denitrificans (strain ATCC 25259 / T1).